A 325-amino-acid polypeptide reads, in one-letter code: Glutarate 2-hydroxylase (325 aa).

Residues His160, Asp162, and His292 each coordinate Fe cation.

The protein belongs to the glutarate hydroxylase family. In terms of assembly, homotetramer. Fe(2+) is required as a cofactor.

The catalysed reaction is glutarate + 2-oxoglutarate + O2 = (S)-2-hydroxyglutarate + succinate + CO2. It participates in amino-acid degradation. Acts as an alpha-ketoglutarate-dependent dioxygenase catalyzing hydroxylation of glutarate (GA) to L-2-hydroxyglutarate (L2HG). Functions in a L-lysine degradation pathway that proceeds via cadaverine, glutarate and L-2-hydroxyglutarate. The chain is Glutarate 2-hydroxylase from Escherichia coli O127:H6 (strain E2348/69 / EPEC).